A 329-amino-acid polypeptide reads, in one-letter code: DNA-directed RNA polymerase subunit alpha (329 aa).

Residues 1 to 235 (MLGSVTDFLK…EQLDAFVDLR (235 aa)) are alpha N-terminal domain (alpha-NTD). The segment at 249–329 (FDPILLRPVD…NWPPASLADN (81 aa)) is alpha C-terminal domain (alpha-CTD).

This sequence belongs to the RNA polymerase alpha chain family. As to quaternary structure, homodimer. The RNAP catalytic core consists of 2 alpha, 1 beta, 1 beta' and 1 omega subunit. When a sigma factor is associated with the core the holoenzyme is formed, which can initiate transcription.

The catalysed reaction is RNA(n) + a ribonucleoside 5'-triphosphate = RNA(n+1) + diphosphate. Functionally, DNA-dependent RNA polymerase catalyzes the transcription of DNA into RNA using the four ribonucleoside triphosphates as substrates. This Tolumonas auensis (strain DSM 9187 / NBRC 110442 / TA 4) protein is DNA-directed RNA polymerase subunit alpha.